The primary structure comprises 332 residues: Homeobox protein SIX3 (332 aa).

The interaction with TLE5 stretch occupies residues 72–119 (APPEELSMFQLPTLNFSPEQVASVCETLEETGDIERLGRFLWSLPVAP). The homeobox DNA-binding region spans 206-265 (GEQKTHCFKERTRSLLREWYLQDPYPNPSKKRELAQATGLTPTQVGNWFKNRRQRDRAAA). The interval 232–234 (NPS) is bind to RHO promoter. Disordered stretches follow at residues 232-251 (NPSKKRELAQATGLTPTQVG) and 258-332 (RQRD…ECDV). Positions 293 to 309 (SAESPSTAASPTTSVSS) are enriched in low complexity. Residues 316–332 (TGTSILSVTSSDSECDV) are compositionally biased toward polar residues.

The protein belongs to the SIX/Sine oculis homeobox family. In terms of assembly, interacts with EYA4; translocates EYA4 from the cytoplasm to the nucleus and promotes activation of their target genes. Interacts with MTA1 and HDAC2; represses its own transcription. Interacts with MTA1; facilitates the binding of SIX3 to the core DNA motif of SIX3 promoter. Interacts with EYA1; promotes EYA1 translocation to the nucleus. Interacts with TLE1 and TLE5 (via Q domain); can act in combination with either TLE1 and/or TLE5 leading to transcriptional repression or activation, respectively. Interacts (via homeobox) with NR4A3; differentially regulates the transcriptional activities NR4A3. Interacts with GMNN. Interacts with TLE4.

The protein localises to the nucleus. Functionally, transcriptional regulator which can act as both a transcriptional repressor and activator by binding a ATTA homeodomain core recognition sequence on these target genes. During forebrain development represses WNT1 expression allowing zona limitans intrathalamica formation and thereby ensuring proper anterio-posterior patterning of the diencephalon and formation of the rostral diencephalon. Acts as a direct upstream activator of SHH expression in the rostral diencephalon ventral midline and that in turn SHH maintains its expression. In addition, Six3 activity is required for the formation of the telencephalon. During postnatal stages of brain development is necessary for ependymal cell maturation by promoting the maturation of radial glia into ependymal cells through regulation of neuroblast proliferation and migration. Acts on the proliferation and differentiation of neural progenitor cells through activating transcription of CCND1 and CCND2. During early lens formation plays a role in lens induction and specification by activating directly PAX6 in the presumptive lens ectoderm. In turn PAX6 activates SIX3 resulting in activation of PDGFRA and CCND1 promoting cell proliferation. Also is required for the neuroretina development by directly suppressing WNT8B expression in the anterior neural plate territory. Its action during retina development and lens morphogenesis is TLE5 and TLE4-dependent manner. Furthermore, during eye development regulates several genes expression. Before and during early lens development represses the CRYGF promoter by binding a SIX repressor element. Directly activates RHO transcription, or cooperates with CRX or NRL. Six3 also functions in the formation of the proximodistal axis of the optic cup, and promotes the formation of optic vesicles-like structures. During pituitary development, acts in parallel or alternatively with HESX1 to control cell proliferation through Wnt/beta-catenin pathway. Plays a role in eye development by suppressing WNT1 expression and in dorsal-ventral patterning by repressing BMP signaling pathway. The sequence is that of Homeobox protein SIX3 (SIX3) from Homo sapiens (Human).